A 283-amino-acid polypeptide reads, in one-letter code: Non-selective voltage-gated ion channel VDAC3 (283 aa).

Position 2 is an N-acetylcysteine (C2). The residue at position 4 (T4) is a Phosphothreonine. K12, K15, and K20 each carry N6-acetyllysine. A run of 2 beta stranded transmembrane segments spans residues 26-35 (MVKIDLKTKS) and 39-47 (VEFSTSGHA). A Glycyl lysine isopeptide (Lys-Gly) (interchain with G-Cter in ubiquitin) cross-link involves residue K53. 3 beta stranded membrane-spanning segments follow: residues 54-64 (ASGNLETKYKV), 69-76 (LTFTQKWN), and 80-89 (TLGTEISWEN). Position 90 is an N6-acetyllysine (K90). A beta stranded transmembrane segment spans residues 95–104 (LKLTLDTIFV). Residues K109 and K110 each participate in a glycyl lysine isopeptide (Lys-Gly) (interchain with G-Cter in ubiquitin) cross-link. The next 10 beta stranded transmembrane spans lie at 111–120 (SGKLKASYRR), 123–130 (FSLGSNVD), 137–145 (TIYGWAVLA), 150–158 (LAGYQMSFD), 163–175 (KLSQNNFALGYKA), 178–185 (FQLHTHVN), 189–198 (EFGGSIYQKV), 202–211 (IETSINLAWT), 218–227 (RFGIAAKYKL), and 231–238 (TSLSAKVN). S241 carries the post-translational modification Phosphoserine. NAD(+)-binding positions include 242–244 (LIG) and 260–264 (SALID). Transmembrane regions (beta stranded) follow at residues 242 to 251 (LIGLGYTQTL) and 254 to 263 (GVKLTLSALI). N6-acetyllysine; alternate is present on K266. A Glycyl lysine isopeptide (Lys-Gly) (interchain with G-Cter in ubiquitin); alternate cross-link involves residue K266. A beta stranded transmembrane segment spans residues 273-282 (HKVGLGFELE).

Belongs to the eukaryotic mitochondrial porin family. As to quaternary structure, interacts with ARMC12 in a TBC1D21-dependent manner. Interacts with MISFA. In terms of processing, ubiquitinated by PRKN during mitophagy, leading to its degradation and enhancement of mitophagy. Deubiquitinated by USP30. As to expression, highest levels of expression detected in testis, less but still abundant expression in heart, kidney, brain, and skeletal muscle.

It localises to the mitochondrion outer membrane. The protein localises to the membrane. It carries out the reaction chloride(in) = chloride(out). The catalysed reaction is K(+)(in) = K(+)(out). Its function is as follows. Non-selective voltage-gated ion channel that mediates the transport of anions and cations through the mitochondrion outer membrane and plasma membrane. Forms a high-conducting channel with a stable open state and a voltage-induced closure with a mild preference for anions over cations. Involved in male fertility and sperm mitochondrial sheath formation. This is Non-selective voltage-gated ion channel VDAC3 from Mus musculus (Mouse).